We begin with the raw amino-acid sequence, 131 residues long: uncharacterized protein (131 aa).

The protein localises to the plastid. The protein resides in the chloroplast. This is an uncharacterized protein from Chlorella vulgaris (Green alga).